The sequence spans 202 residues: Probable ATP-dependent Clp protease proteolytic subunit 3 (202 aa).

Catalysis depends on Ser-101, which acts as the Nucleophile. His-126 is a catalytic residue.

It belongs to the peptidase S14 family. As to quaternary structure, fourteen ClpP subunits assemble into 2 heptameric rings which stack back to back to give a disk-like structure with a central cavity, resembling the structure of eukaryotic proteasomes.

The protein localises to the cytoplasm. It catalyses the reaction Hydrolysis of proteins to small peptides in the presence of ATP and magnesium. alpha-casein is the usual test substrate. In the absence of ATP, only oligopeptides shorter than five residues are hydrolyzed (such as succinyl-Leu-Tyr-|-NHMec, and Leu-Tyr-Leu-|-Tyr-Trp, in which cleavage of the -Tyr-|-Leu- and -Tyr-|-Trp bonds also occurs).. Functionally, cleaves peptides in various proteins in a process that requires ATP hydrolysis. Has a chymotrypsin-like activity. Plays a major role in the degradation of misfolded proteins. The chain is Probable ATP-dependent Clp protease proteolytic subunit 3 from Synechocystis sp. (strain ATCC 27184 / PCC 6803 / Kazusa).